We begin with the raw amino-acid sequence, 200 residues long: 3-isopropylmalate dehydratase small subunit (200 aa).

It belongs to the LeuD family. LeuD type 1 subfamily. Heterodimer of LeuC and LeuD.

It carries out the reaction (2R,3S)-3-isopropylmalate = (2S)-2-isopropylmalate. The protein operates within amino-acid biosynthesis; L-leucine biosynthesis; L-leucine from 3-methyl-2-oxobutanoate: step 2/4. In terms of biological role, catalyzes the isomerization between 2-isopropylmalate and 3-isopropylmalate, via the formation of 2-isopropylmaleate. The protein is 3-isopropylmalate dehydratase small subunit of Arthrobacter sp. (strain FB24).